The chain runs to 58 residues: MAKTIVHENESIDDALRRFKRSVSRSGTLQEYRKREFYEKPSVRRKLKSEAARKRRHY.

This sequence belongs to the bacterial ribosomal protein bS21 family.

This chain is Small ribosomal subunit protein bS21, found in Lactobacillus acidophilus (strain ATCC 700396 / NCK56 / N2 / NCFM).